The chain runs to 393 residues: Formate-dependent phosphoribosylglycinamide formyltransferase (393 aa).

N(1)-(5-phospho-beta-D-ribosyl)glycinamide-binding positions include 22-23 (EL) and Glu82. ATP contacts are provided by residues Arg114, Lys155, 160–165 (SSGKGQ), 195–198 (ESFV), and Glu203. The 190-residue stretch at 119-308 (RLAAEELGLR…EFALHVRAVL (190 aa)) folds into the ATP-grasp domain. The Mg(2+) site is built by Glu267 and Glu279. N(1)-(5-phospho-beta-D-ribosyl)glycinamide contacts are provided by residues Asp286, Lys356, and 363-364 (RR).

It belongs to the PurK/PurT family. Homodimer.

It carries out the reaction N(1)-(5-phospho-beta-D-ribosyl)glycinamide + formate + ATP = N(2)-formyl-N(1)-(5-phospho-beta-D-ribosyl)glycinamide + ADP + phosphate + H(+). It participates in purine metabolism; IMP biosynthesis via de novo pathway; N(2)-formyl-N(1)-(5-phospho-D-ribosyl)glycinamide from N(1)-(5-phospho-D-ribosyl)glycinamide (formate route): step 1/1. Its function is as follows. Involved in the de novo purine biosynthesis. Catalyzes the transfer of formate to 5-phospho-ribosyl-glycinamide (GAR), producing 5-phospho-ribosyl-N-formylglycinamide (FGAR). Formate is provided by PurU via hydrolysis of 10-formyl-tetrahydrofolate. The polypeptide is Formate-dependent phosphoribosylglycinamide formyltransferase (Oleidesulfovibrio alaskensis (strain ATCC BAA-1058 / DSM 17464 / G20) (Desulfovibrio alaskensis)).